Here is a 398-residue protein sequence, read N- to C-terminus: E3 ubiquitin-protein ligase ATL6 (398 aa).

A signal peptide spans 1 to 29 (MRSSDHMAFAGVLPIVFLLILSSADLAAS). Residues 50 to 70 (AVIVVILIAALFFMGFFSIYF) traverse the membrane as a helical segment. The RING-type; atypical zinc-finger motif lies at 128–170 (CAICLNEFEDDETLRLLPKCDHVFHPHCIDAWLEAHVTCPVCR). At serine 278 the chain carries Phosphoserine. The disordered stretch occupies residues 368-398 (PRGGVNKDGEGTSVKSTGASGSTSGSVRLPV). Low complexity predominate over residues 378–398 (GTSVKSTGASGSTSGSVRLPV).

The protein belongs to the RING-type zinc finger family. ATL subfamily.

It localises to the membrane. The enzyme catalyses S-ubiquitinyl-[E2 ubiquitin-conjugating enzyme]-L-cysteine + [acceptor protein]-L-lysine = [E2 ubiquitin-conjugating enzyme]-L-cysteine + N(6)-ubiquitinyl-[acceptor protein]-L-lysine.. It functions in the pathway protein modification; protein ubiquitination. In terms of biological role, E3 ubiquitin-protein ligase able to catalyze polyubiquitination with ubiquitin-conjugating enzyme E2 UBC8 in vitro. May be involved in the plant C/N response and the early steps of the plant defense signaling pathway. The protein is E3 ubiquitin-protein ligase ATL6 (ATL6) of Arabidopsis thaliana (Mouse-ear cress).